Consider the following 116-residue polypeptide: Small ribosomal subunit protein bS16 (116 aa).

Residues 88–116 (RNNPKAAVPGKRMAELAKKKADRAAASAE) are disordered. Basic and acidic residues predominate over residues 99 to 110 (RMAELAKKKADR).

This sequence belongs to the bacterial ribosomal protein bS16 family.

The sequence is that of Small ribosomal subunit protein bS16 from Cereibacter sphaeroides (strain ATCC 17029 / ATH 2.4.9) (Rhodobacter sphaeroides).